We begin with the raw amino-acid sequence, 484 residues long: Protein nucleotidyltransferase YdiU (484 aa).

Positions 92, 94, 95, 115, 127, 128, 178, and 185 each coordinate ATP. Catalysis depends on D258, which acts as the Proton acceptor. Mg(2+)-binding residues include N259 and D268. D268 is an ATP binding site.

It belongs to the SELO family. Requires Mg(2+) as cofactor. It depends on Mn(2+) as a cofactor.

It catalyses the reaction L-seryl-[protein] + ATP = 3-O-(5'-adenylyl)-L-seryl-[protein] + diphosphate. The catalysed reaction is L-threonyl-[protein] + ATP = 3-O-(5'-adenylyl)-L-threonyl-[protein] + diphosphate. It carries out the reaction L-tyrosyl-[protein] + ATP = O-(5'-adenylyl)-L-tyrosyl-[protein] + diphosphate. The enzyme catalyses L-histidyl-[protein] + UTP = N(tele)-(5'-uridylyl)-L-histidyl-[protein] + diphosphate. It catalyses the reaction L-seryl-[protein] + UTP = O-(5'-uridylyl)-L-seryl-[protein] + diphosphate. The catalysed reaction is L-tyrosyl-[protein] + UTP = O-(5'-uridylyl)-L-tyrosyl-[protein] + diphosphate. Functionally, nucleotidyltransferase involved in the post-translational modification of proteins. It can catalyze the addition of adenosine monophosphate (AMP) or uridine monophosphate (UMP) to a protein, resulting in modifications known as AMPylation and UMPylation. The sequence is that of Protein nucleotidyltransferase YdiU from Mycolicibacterium smegmatis (strain ATCC 700084 / mc(2)155) (Mycobacterium smegmatis).